We begin with the raw amino-acid sequence, 491 residues long: Sucrose transport protein SUC7 (491 aa).

Residues 1-13 (MSDLQANKDETTV) show a composition bias toward basic and acidic residues. A disordered region spans residues 1–25 (MSDLQANKDETTVDRQSSSSVDLDG). At 1–32 (MSDLQANKDETTVDRQSSSSVDLDGPSPLRKM) the chain is on the cytoplasmic side. Residue serine 17 is modified to Phosphoserine. A helical membrane pass occupies residues 33–53 (ISVASIAAGIQFGWALQLSLL). Over 54-67 (TPYVQLLGVPHKWP) the chain is Extracellular. Residues 68–88 (SFIWLCGPVSGLLVQPSVGYF) form a helical membrane-spanning segment. The Cytoplasmic segment spans residues 89–100 (SDRCTSRFGRRR). The chain crosses the membrane as a helical span at residues 101 to 121 (PFIATGALLVAVSVVLIGYAA). Residues 122–138 (DFGHSMGDKIDKPVKMR) lie on the Extracellular side of the membrane. A helical membrane pass occupies residues 139–159 (AVVIFALGFWILDVANNTLQG). Residues 160 to 180 (PCRAFLGDLAAGDAQKTRTAN) are Cytoplasmic-facing. Residues 181-201 (AFFSFFMAVGNVLGYAAGSYT) form a helical membrane-spanning segment. At 202–223 (NLYKIFPFTMTKACDIYCANLK) the chain is on the extracellular side. The helical transmembrane segment at 224-244 (SCFFLSITLLLVVTIIALWYV) threads the bilayer. Residues 245–276 (EDKQWSPKADSDNEKTPFFGEIFGAFKVMKRP) are Cytoplasmic-facing. Residues 277–297 (MWMLLIVTALNWIAWFPFLLY) traverse the membrane as a helical segment. The Extracellular portion of the chain corresponds to 298–323 (DTDWMGREVYGGDSKGDDKMKKLYNQ). The chain crosses the membrane as a helical span at residues 324–344 (GIHVGALGLMLNSIVLGVMSL). The Cytoplasmic portion of the chain corresponds to 345 to 358 (GIEGISRKMGGAKR). A helical membrane pass occupies residues 359-379 (LWGAVNIILAVCLAMTVLVTK). Over 380 to 402 (KAEEHRRIAGPMALPTDGIRAGA) the chain is Extracellular. A helical membrane pass occupies residues 403–423 (LTLFALLGIPLAITFSIPFAL). Over 424–443 (ASIISSSSGAGQRLSLGVLN) the chain is Cytoplasmic. The chain crosses the membrane as a helical span at residues 444–464 (MAIVIPQMIVSFGVGPIDALF). At 465–468 (GDGN) the chain is on the extracellular side. A helical transmembrane segment spans residues 469–489 (LPGFVVGAIAAAVSSIVAFTV). The Cytoplasmic segment spans residues 490–491 (LP).

Belongs to the glycoside-pentoside-hexuronide (GPH) cation symporter transporter (TC 2.A.2.4) family. As to expression, expressed in anthers.

Its subcellular location is the cell membrane. The protein operates within glycan biosynthesis; sucrose metabolism. Functionally, may be responsible for the transport of glucosides into the cell, with the concomitant uptake of protons (symport system). Does not seem to transport sucrose. The protein is Sucrose transport protein SUC7 of Arabidopsis thaliana (Mouse-ear cress).